Consider the following 229-residue polypeptide: DNA mismatch repair protein MutH (229 aa).

This sequence belongs to the MutH family.

It is found in the cytoplasm. Its function is as follows. Sequence-specific endonuclease that cleaves unmethylated GATC sequences. It is involved in DNA mismatch repair. The protein is DNA mismatch repair protein MutH of Escherichia coli O45:K1 (strain S88 / ExPEC).